We begin with the raw amino-acid sequence, 531 residues long: UDP-glucuronosyltransferase 1A3 (531 aa).

The N-terminal stretch at 1 to 25 (MGIQGFLQKLSGLLLLLCALPWAEG) is a signal peptide. Residues Asn116, Asn139, Asn293, and Asn431 are each glycosylated (N-linked (GlcNAc...) asparagine). A helical membrane pass occupies residues 489–505 (VIGFLLAIVLTVVFIVY).

It belongs to the UDP-glycosyltransferase family. As to quaternary structure, homodimers. Homooligomer. Interacts with UGT1A1, UGT1A4, UGT1A6, UGT1A7, UGT1A8, UGT1A9 and UGT1A10 to form heterodimers.

It is found in the endoplasmic reticulum membrane. It carries out the reaction glucuronate acceptor + UDP-alpha-D-glucuronate = acceptor beta-D-glucuronoside + UDP + H(+). It catalyses the reaction 17beta-estradiol + UDP-alpha-D-glucuronate = 17beta-estradiol 3-O-(beta-D-glucuronate) + UDP + H(+). The catalysed reaction is 17beta-estradiol + UDP-alpha-D-glucuronate = 17beta-estradiol 17-O-(beta-D-glucuronate) + UDP + H(+). The enzyme catalyses 17alpha-estradiol + UDP-alpha-D-glucuronate = 17alpha-estradiol 3-O-(beta-D-glucuronate) + UDP + H(+). It carries out the reaction estrone + UDP-alpha-D-glucuronate = estrone 3-O-(beta-D-glucuronate) + UDP + H(+). It catalyses the reaction chenodeoxycholate + UDP-alpha-D-glucuronate = chenodeoxycholoyl-24-O-(beta-D-glucuronate) + UDP. The catalysed reaction is deoxycholate + UDP-alpha-D-glucuronate = deoxycholoyl-24-O-(beta-D-glucuronate) + UDP. The enzyme catalyses lithocholate + UDP-alpha-D-glucuronate = lithocholoyl-24-O-(beta-D-glucuronate) + UDP. It carries out the reaction hyodeoxycholate + UDP-alpha-D-glucuronate = hyodeoxycholoyl-24-O-(beta-D-glucuronate) + UDP. It catalyses the reaction hyocholate + UDP-alpha-D-glucuronate = hyocholoyl-24-O-(beta-D-glucuronate) + UDP. The catalysed reaction is calcidiol + UDP-alpha-D-glucuronate = calcidiol 25-O-(beta-D-glucuronide) + UDP + H(+). The enzyme catalyses losartan + UDP-alpha-D-glucuronate = losartan-2-N-beta-D-glucuronide + UDP. It carries out the reaction candesartan + UDP-alpha-D-glucuronate = candesartan-2-N-beta-D-glucuronide + UDP. It catalyses the reaction zolasartan + UDP-alpha-D-glucuronate = zolarsartan-2-N-beta-D-glucuronide + UDP. The catalysed reaction is (E)-ferulate + UDP-alpha-D-glucuronate = (E)-4-O-(beta-D-glucuronosyl)-ferulate + UDP + H(+). The enzyme catalyses (E)-ferulate + UDP-alpha-D-glucuronate = (E)-ferulic acid beta-D-glucuronate ester + UDP. In terms of biological role, UDP-glucuronosyltransferase (UGT) that catalyzes phase II biotransformation reactions in which lipophilic substrates are conjugated with glucuronic acid to increase the metabolite's water solubility, thereby facilitating excretion into either the urine or bile. Essential for the elimination and detoxification of drugs, xenobiotics and endogenous compounds. Catalyzes the glucuronidation of endogenous estrogen hormones such as estradiol and estrone. Contributes to bile acid (BA) detoxification by catalyzing the glucuronidation of BA substrates, which are natural detergents for dietary lipids absorption. Involved in the glucuronidation of calcidiol, which is the major circulating form of vitamin D3, essential for the regulation of calcium and phosphate homeostasis. Involved in the glucuronidation of the phytochemical ferulic acid at the phenolic or the carboxylic acid group. Involved in the glucuronidation of the AGTR1 angiotensin receptor antagonists losartan, candesartan and zolarsartan, which can inhibit the effect of angiotensin II. The sequence is that of UDP-glucuronosyltransferase 1A3 from Rattus norvegicus (Rat).